Here is a 331-residue protein sequence, read N- to C-terminus: uncharacterized protein (331 aa).

Pentapeptide repeat domains are found at residues 20–59 (LKLP…NLGQ), 60–99 (ANLV…ILRD), 100–139 (SDMT…NMRQ), 151–190 (AILG…DLRK), 191–230 (ADLS…KISE), 231–270 (AEMT…DLSR), and 271–310 (ANLT…DLMS).

This is an uncharacterized protein from Synechocystis sp. (strain ATCC 27184 / PCC 6803 / Kazusa).